Consider the following 254-residue polypeptide: tRNA (guanine-N(1)-)-methyltransferase (254 aa).

S-adenosyl-L-methionine contacts are provided by residues Gly112 and 131–136 (IGDYIL).

It belongs to the RNA methyltransferase TrmD family. Homodimer.

The protein resides in the cytoplasm. The catalysed reaction is guanosine(37) in tRNA + S-adenosyl-L-methionine = N(1)-methylguanosine(37) in tRNA + S-adenosyl-L-homocysteine + H(+). Its function is as follows. Specifically methylates guanosine-37 in various tRNAs. The polypeptide is tRNA (guanine-N(1)-)-methyltransferase (Sulfurihydrogenibium sp. (strain YO3AOP1)).